We begin with the raw amino-acid sequence, 304 residues long: Tyrosine recombinase XerC (304 aa).

Residues 2–88 (ENVKNFVKLF…ALRSFYKFLM (87 aa)) enclose the Core-binding (CB) domain. Positions 109–294 (RIPKFLYQKE…SKEMLRNTYM (186 aa)) constitute a Tyr recombinase domain. Active-site residues include Arg-149, Lys-173, His-246, Arg-249, and His-272. The O-(3'-phospho-DNA)-tyrosine intermediate role is filled by Tyr-281.

The protein belongs to the 'phage' integrase family. XerC subfamily. Forms a cyclic heterotetrameric complex composed of two molecules of XerC and two molecules of XerD.

Its subcellular location is the cytoplasm. Its function is as follows. Site-specific tyrosine recombinase, which acts by catalyzing the cutting and rejoining of the recombining DNA molecules. The XerC-XerD complex is essential to convert dimers of the bacterial chromosome into monomers to permit their segregation at cell division. It also contributes to the segregational stability of plasmids. This Bacillus subtilis (strain 168) protein is Tyrosine recombinase XerC.